Reading from the N-terminus, the 215-residue chain is Thiamine-phosphate synthase (215 aa).

Residues 37-41 (QLRIK) and N69 contribute to the 4-amino-2-methyl-5-(diphosphooxymethyl)pyrimidine site. Residues D70 and D89 each coordinate Mg(2+). S108 serves as a coordination point for 4-amino-2-methyl-5-(diphosphooxymethyl)pyrimidine. 134 to 136 (TQT) is a binding site for 2-[(2R,5Z)-2-carboxy-4-methylthiazol-5(2H)-ylidene]ethyl phosphate. K137 lines the 4-amino-2-methyl-5-(diphosphooxymethyl)pyrimidine pocket. 2-[(2R,5Z)-2-carboxy-4-methylthiazol-5(2H)-ylidene]ethyl phosphate is bound by residues G166 and 186-187 (VS).

Belongs to the thiamine-phosphate synthase family. The cofactor is Mg(2+).

The catalysed reaction is 2-[(2R,5Z)-2-carboxy-4-methylthiazol-5(2H)-ylidene]ethyl phosphate + 4-amino-2-methyl-5-(diphosphooxymethyl)pyrimidine + 2 H(+) = thiamine phosphate + CO2 + diphosphate. It catalyses the reaction 2-(2-carboxy-4-methylthiazol-5-yl)ethyl phosphate + 4-amino-2-methyl-5-(diphosphooxymethyl)pyrimidine + 2 H(+) = thiamine phosphate + CO2 + diphosphate. It carries out the reaction 4-methyl-5-(2-phosphooxyethyl)-thiazole + 4-amino-2-methyl-5-(diphosphooxymethyl)pyrimidine + H(+) = thiamine phosphate + diphosphate. The protein operates within cofactor biosynthesis; thiamine diphosphate biosynthesis; thiamine phosphate from 4-amino-2-methyl-5-diphosphomethylpyrimidine and 4-methyl-5-(2-phosphoethyl)-thiazole: step 1/1. Condenses 4-methyl-5-(beta-hydroxyethyl)thiazole monophosphate (THZ-P) and 2-methyl-4-amino-5-hydroxymethyl pyrimidine pyrophosphate (HMP-PP) to form thiamine monophosphate (TMP). The chain is Thiamine-phosphate synthase from Yersinia pseudotuberculosis serotype I (strain IP32953).